The sequence spans 131 residues: Lymphocyte antigen 6C1 (131 aa).

The N-terminal stretch at 1–26 is a signal peptide; that stretch reads MDTSHTTKSCVLILLVALLCAERAQG. The UPAR/Ly6 domain occupies 27-115; that stretch reads LQCYECYGVP…PTAGSTWTMA (89 aa). Cystine bridges form between Cys29–Cys53, Cys32–Cys41, Cys46–Cys74, Cys78–Cys95, and Cys96–Cys101. The GPI-anchor amidated glycine moiety is linked to residue Gly109. A propeptide spans 110–131 (removed in mature form); that stretch reads STWTMAGVLLFSLSSVVLQTLL.

It localises to the cell membrane. This is Lymphocyte antigen 6C1 (Ly6c1) from Mus musculus (Mouse).